The sequence spans 216 residues: Vascular endothelial growth factor A (216 aa).

Positions 1–26 (MNFLLTWIHWGLAALLYLQSAELSKA) are cleaved as a signal peptide. Intrachain disulfides connect Cys-52/Cys-94, Cys-83/Cys-128, and Cys-87/Cys-130. A glycan (N-linked (GlcNAc...) asparagine) is linked at Asn-101. Residues 132–141 (PKKDVKNKQE) are compositionally biased toward basic and acidic residues. A disordered region spans residues 132 to 167 (PKKDVKNKQEKKSKRGKGKGQKRKRKKGRYKPPSFH). Residues 142–161 (KKSKRGKGKGQKRKRKKGRY) show a composition bias toward basic residues.

It belongs to the PDGF/VEGF growth factor family. In terms of assembly, homodimer; disulfide-linked. Also found as heterodimer with PGF.

Functionally, growth factor active in angiogenesis, vasculogenesis and endothelial cell growth. Induces endothelial cell proliferation, promotes cell migration, inhibits apoptosis and induces permeabilization of blood vessels. Binds to the FLT1/VEGFR1 and KDR/VEGFR2 receptors, heparan sulfate and heparin. In Gallus gallus (Chicken), this protein is Vascular endothelial growth factor A (VEGFA).